The primary structure comprises 882 residues: Nitrogen regulatory protein areA (882 aa).

Positions 1–13 (MSGLTLGGGGSGG) are enriched in gly residues. Disordered stretches follow at residues 1-75 (MSGL…PDSL), 139-191 (KRKE…LTSD), 228-257 (SRKD…SEFG), 325-344 (NNHS…FGLD), 394-422 (STDF…EHSM), 461-545 (NQDQ…DMNG), and 579-675 (MDTP…GPTT). The segment covering 48–59 (SDFSQLSDDFSF) has biased composition (low complexity). Composition is skewed to polar residues over residues 156–169 (NSVS…QLTS) and 177–191 (PTRQ…LTSD). The span at 325–334 (NNHSSSHHNH) shows a compositional bias: basic residues. Composition is skewed to polar residues over residues 394–413 (STDF…STPQ) and 492–503 (QVLNPNDFSTGA). Basic and acidic residues predominate over residues 604-613 (VRNREQDPRR). The segment covering 617–642 (ARTTSTPNTAQLLRQSMNANTSHTSP) has biased composition (polar residues). Residues 676–700 (CTNCFTQTTPLWRRNPEGQPLCNAC) form a GATA-type zinc finger. A disordered region spans residues 723–871 (RNRSSANSLA…NHSIAGGQGA (149 aa)). The span at 745 to 759 (KNSVQQTTVTTPTSS) shows a compositional bias: low complexity. Residues 795 to 811 (NPTTSSPGQSRGTSSVQ) show a composition bias toward polar residues. Low complexity predominate over residues 848–861 (ALAPAMPPAAANPA).

It localises to the nucleus. Functionally, major nitrogen regulatory protein. Positively acting regulatory gene of nitrogen metabolite repression. The chain is Nitrogen regulatory protein areA (areA) from Aspergillus niger.